A 123-amino-acid polypeptide reads, in one-letter code: Large ribosomal subunit protein uL29 (123 aa).

Belongs to the universal ribosomal protein uL29 family. Component of the large ribosomal subunit.

It localises to the cytoplasm. Its function is as follows. Component of the large ribosomal subunit. The ribosome is a large ribonucleoprotein complex responsible for the synthesis of proteins in the cell. The polypeptide is Large ribosomal subunit protein uL29 (rpl35) (Ictalurus punctatus (Channel catfish)).